The following is a 451-amino-acid chain: Neuraminidase (451 aa).

At 1–6 (MNPNQK) the chain is on the intravirion side. Residues 7–29 (IITIGSMSLTIATVCFLMQIAIL) traverse the membrane as a helical segment. The tract at residues 11-33 (GSMSLTIATVCFLMQIAILATNV) is involved in apical transport and lipid raft association. Topologically, residues 30-451 (ATNVTLHFRQ…DGANINFMPL (422 aa)) are virion surface. 3 N-linked (GlcNAc...) asparagine; by host glycosylation sites follow: N32, N48, and N66. The interval 36–68 (HFRQNEESIPAYNQTTPCKPIIIERNIKYRNWS) is hypervariable stalk region. The segment at 71-451 (QCQITGFAPF…DGANINFMPL (381 aa)) is head of neuraminidase. Intrachain disulfides connect C72–C399, C104–C109, C163–C210, C212–C217, C258–C272, C260–C270, C300–C319, and C403–C429. R98 provides a ligand contact to substrate. Residues N123 and N126 are each glycosylated (N-linked (GlcNAc...) asparagine; by host). D131 acts as the Proton donor/acceptor in catalysis. A substrate-binding site is contributed by R132. 2 N-linked (GlcNAc...) asparagine; by host glycosylation sites follow: N180 and N214. 256–257 (EE) contacts substrate. R273 contacts substrate. Ca(2+) is bound by residues D274, G278, and D306. The interval 307–331 (TPRNDDSSSSSNCRDPNNERGNPGV) is disordered. Residue R353 coordinates substrate. Residue N384 is glycosylated (N-linked (GlcNAc...) asparagine; by host). Catalysis depends on Y388, which acts as the Nucleophile.

This sequence belongs to the glycosyl hydrolase 34 family. Homotetramer. Ca(2+) is required as a cofactor. In terms of processing, N-glycosylated.

Its subcellular location is the virion membrane. The protein localises to the host apical cell membrane. It carries out the reaction Hydrolysis of alpha-(2-&gt;3)-, alpha-(2-&gt;6)-, alpha-(2-&gt;8)- glycosidic linkages of terminal sialic acid residues in oligosaccharides, glycoproteins, glycolipids, colominic acid and synthetic substrates.. With respect to regulation, inhibited by the neuraminidase inhibitors zanamivir (Relenza) and oseltamivir (Tamiflu). These drugs interfere with the release of progeny virus from infected cells and are effective against all influenza strains. Resistance to neuraminidase inhibitors is quite rare. Functionally, catalyzes the removal of terminal sialic acid residues from viral and cellular glycoconjugates. Cleaves off the terminal sialic acids on the glycosylated HA during virus budding to facilitate virus release. Additionally helps virus spread through the circulation by further removing sialic acids from the cell surface. These cleavages prevent self-aggregation and ensure the efficient spread of the progeny virus from cell to cell. Otherwise, infection would be limited to one round of replication. Described as a receptor-destroying enzyme because it cleaves a terminal sialic acid from the cellular receptors. May facilitate viral invasion of the upper airways by cleaving the sialic acid moieties on the mucin of the airway epithelial cells. Likely to plays a role in the budding process through its association with lipid rafts during intracellular transport. May additionally display a raft-association independent effect on budding. Plays a role in the determination of host range restriction on replication and virulence. Sialidase activity in late endosome/lysosome traffic seems to enhance virus replication. In Aves, this protein is Neuraminidase.